A 455-amino-acid chain; its full sequence is UDP-N-acetylmuramoylalanine--D-glutamate ligase (455 aa).

Residue 112–118 (GTNGKTT) coordinates ATP.

Belongs to the MurCDEF family.

The protein localises to the cytoplasm. The enzyme catalyses UDP-N-acetyl-alpha-D-muramoyl-L-alanine + D-glutamate + ATP = UDP-N-acetyl-alpha-D-muramoyl-L-alanyl-D-glutamate + ADP + phosphate + H(+). It participates in cell wall biogenesis; peptidoglycan biosynthesis. Functionally, cell wall formation. Catalyzes the addition of glutamate to the nucleotide precursor UDP-N-acetylmuramoyl-L-alanine (UMA). In Trichormus variabilis (strain ATCC 29413 / PCC 7937) (Anabaena variabilis), this protein is UDP-N-acetylmuramoylalanine--D-glutamate ligase.